The primary structure comprises 124 residues: Ribonuclease pancreatic (124 aa).

The segment covering 1–13 (KETAAAKFERQHM) has biased composition (basic and acidic residues). Positions 1 to 24 (KETAAAKFERQHMDSSTSSASSSN) are disordered. 2 residues coordinate substrate: K7 and R10. H12 functions as the Proton acceptor in the catalytic mechanism. 4 disulfide bridges follow: C26-C84, C40-C95, C58-C110, and C65-C72. Residues 41–45 (KPVBT), K66, and R85 each bind substrate. The active-site Proton donor is H119.

Belongs to the pancreatic ribonuclease family. In terms of assembly, monomer. Interacts with and forms tight 1:1 complexes with RNH1. Dimerization of two such complexes may occur. Interaction with RNH1 inhibits this protein. Pancreas.

The protein resides in the secreted. The catalysed reaction is an [RNA] containing cytidine + H2O = an [RNA]-3'-cytidine-3'-phosphate + a 5'-hydroxy-ribonucleotide-3'-[RNA].. The enzyme catalyses an [RNA] containing uridine + H2O = an [RNA]-3'-uridine-3'-phosphate + a 5'-hydroxy-ribonucleotide-3'-[RNA].. In terms of biological role, endonuclease that catalyzes the cleavage of RNA on the 3' side of pyrimidine nucleotides. Acts on single-stranded and double-stranded RNA. This is Ribonuclease pancreatic (RNASE1) from Boselaphus tragocamelus (Nilgai).